Consider the following 550-residue polypeptide: Alkaline phosphatase PhoV (550 aa).

A signal peptide spans 1–20 (MKIKLLCISLAVLFCSSANA). Positions 48 and 89 each coordinate Zn(2+). Threonine 89 (phosphothreonine intermediate) is an active-site residue. Residues asparagine 110 and 171–173 (KDR) each bind substrate. Positions 313, 317, 360, 361, and 491 each coordinate Zn(2+).

Zn(2+) is required as a cofactor.

It is found in the cell inner membrane. It catalyses the reaction a phosphate monoester + H2O = an alcohol + phosphate. Its activity is regulated as follows. Subject to competitive inhibition by phosphate. Inhibited by manganese. Magnesium mildly increases enzyme activity when the zinc concentration is suboptimal. Optimal activity is dependent on the presence of 0.01-2% Triton X-100. Triton X-100 at a concentration of 0.05% increases the activity about fivefold relative to that in its absence. The enzyme is even active in Triton X-100 concentrations up to 80%. 50% inhibition by 4 mM EDTA and 50% inhibition by 48 mM sodium citrate. Alkaline phosphatase with broad substrate specificity. In Synechococcus elongatus (strain ATCC 33912 / PCC 7942 / FACHB-805) (Anacystis nidulans R2), this protein is Alkaline phosphatase PhoV.